The following is a 468-amino-acid chain: 6-phospho-beta-galactosidase (468 aa).

Gln19, His116, Asn159, Glu160, and Asn297 together coordinate D-galactose 6-phosphate. The active-site Proton donor is Glu160. The active-site Nucleophile is Glu375. 4 residues coordinate D-galactose 6-phosphate: Ser428, Trp429, Lys435, and Tyr437.

Belongs to the glycosyl hydrolase 1 family.

It carries out the reaction a 6-phospho-beta-D-galactoside + H2O = D-galactose 6-phosphate + an alcohol. Its pathway is carbohydrate metabolism; lactose degradation; D-galactose 6-phosphate and beta-D-glucose from lactose 6-phosphate: step 1/1. The chain is 6-phospho-beta-galactosidase from Streptococcus pyogenes serotype M18 (strain MGAS8232).